The sequence spans 146 residues: SecB-like chaperone SmegB (146 aa).

The protein belongs to the SecB-like family.

In terms of biological role, chaperone component of an orphan antitoxin chaperone (AC) system; there is no toxin gene in close genomic proximity. When expressed in E.coli complements the cold-sensitive phenotype of a secB deletion, suggesting it may have a generic chaperone function. Does not however complement the toxin-neutralizing effect of its M.tuberculosis paralog Rv1957 (AC P95257) in E.coli, probably because the antitoxin genes are not from the same family. This is SecB-like chaperone SmegB from Mycolicibacterium smegmatis (strain ATCC 700084 / mc(2)155) (Mycobacterium smegmatis).